The sequence spans 618 residues: Manganese lipoxygenase (618 aa).

A signal peptide spans M1 to A16. Residues S36–T45 are compositionally biased toward low complexity. Residues S36–A58 are disordered. Over residues Q46 to A58 the composition is skewed to polar residues. A Lipoxygenase domain is found at Y47–V618. N-linked (GlcNAc...) asparagine glycosylation is found at N60, N91, N106, N116, and N157. Residues H290, H294, H478, and N482 each coordinate Mn(2+). N513 carries an N-linked (GlcNAc...) asparagine glycan. Residue V618 participates in Mn(2+) binding.

Belongs to the lipoxygenase family. Manganese lipoxygenase subfamily. It depends on Mn(2+) as a cofactor. Post-translationally, N- and O-glycosylated.

It localises to the secreted. The enzyme catalyses (9Z,12Z)-octadecadienoate + O2 = (11S)-hydroperoxy-(9Z,12Z)-octadecadienoate. It carries out the reaction (9Z,12Z)-octadecadienoate + O2 = (13R)-hydroperoxy-(9Z,11E)-octadecadienoate. It catalyses the reaction (9Z,12Z,15Z)-octadecatrienoate + O2 = (11S)-hydroperoxy-(9Z,12Z,15Z)-octadecatrienoate. The catalysed reaction is (9Z,12Z,15Z)-octadecatrienoate + O2 = (13R)-hydroperoxy-(9Z,11E,15Z)-octadecatrienoate. Lipoxygenase that metabolizes linoleic and alpha-linolenic acids to 11S- and 13R-hydroperoxy fatty acids. At the end of lipoxygenation, the intermediate product 11S-HPODE from linoleic acid is then transformed into 13R-HPODE as the final product. It also acts on alpha-linolenic acid producing 11S-HPOTrE and 13R-HPOTrE with subsequent transformation of 11S-HPOTrE to 13R-HPOTrE as final product. This is Manganese lipoxygenase from Gaeumannomyces avenae (Oat take-all root rot fungus).